The primary structure comprises 280 residues: Diaminopimelate epimerase (280 aa).

Substrate-binding residues include Asn-11 and Asn-62. Residue Cys-71 is the Proton donor of the active site. Substrate contacts are provided by residues 72-73 (GN), Asn-160, Asn-193, and 211-212 (ER). Cys-220 serves as the catalytic Proton acceptor. 221–222 (GT) is a binding site for substrate.

The protein belongs to the diaminopimelate epimerase family. As to quaternary structure, homodimer.

The protein resides in the cytoplasm. It carries out the reaction (2S,6S)-2,6-diaminopimelate = meso-2,6-diaminopimelate. It functions in the pathway amino-acid biosynthesis; L-lysine biosynthesis via DAP pathway; DL-2,6-diaminopimelate from LL-2,6-diaminopimelate: step 1/1. Its function is as follows. Catalyzes the stereoinversion of LL-2,6-diaminopimelate (L,L-DAP) to meso-diaminopimelate (meso-DAP), a precursor of L-lysine and an essential component of the bacterial peptidoglycan. The sequence is that of Diaminopimelate epimerase from Acetivibrio thermocellus (strain ATCC 27405 / DSM 1237 / JCM 9322 / NBRC 103400 / NCIMB 10682 / NRRL B-4536 / VPI 7372) (Clostridium thermocellum).